The sequence spans 487 residues: GTPase Der (487 aa).

EngA-type G domains follow at residues 3–167 (FTLA…EGFA) and 203–378 (LQIA…DIWN). GTP contacts are provided by residues 9 to 16 (GRPNVGKS), 56 to 60 (DTAGL), 119 to 122 (NKAE), 209 to 216 (GRPNAGKS), 256 to 260 (DTAGM), and 321 to 324 (NKWD). One can recognise a KH-like domain in the interval 379 to 463 (RRITTARLNT…PIRLTMRGQG (85 aa)). The tract at residues 451–487 (PGTPIRLTMRGQGDKNPFKERKFRTPSRLRKHLGKKD) is disordered. A compositionally biased stretch (basic residues) spans 471 to 487 (RKFRTPSRLRKHLGKKD).

It belongs to the TRAFAC class TrmE-Era-EngA-EngB-Septin-like GTPase superfamily. EngA (Der) GTPase family. In terms of assembly, associates with the 50S ribosomal subunit.

Its function is as follows. GTPase that plays an essential role in the late steps of ribosome biogenesis. The protein is GTPase Der of Cereibacter sphaeroides (strain ATCC 17029 / ATH 2.4.9) (Rhodobacter sphaeroides).